Consider the following 407-residue polypeptide: Imidazolonepropionase (407 aa).

The Fe(3+) site is built by histidine 74 and histidine 76. Zn(2+) is bound by residues histidine 74 and histidine 76. 4-imidazolone-5-propanoate-binding residues include arginine 83, tyrosine 146, and histidine 179. An N-formimidoyl-L-glutamate-binding site is contributed by tyrosine 146. Residue histidine 244 coordinates Fe(3+). Zn(2+) is bound at residue histidine 244. Glutamine 247 provides a ligand contact to 4-imidazolone-5-propanoate. Residue aspartate 319 participates in Fe(3+) binding. Aspartate 319 serves as a coordination point for Zn(2+). N-formimidoyl-L-glutamate-binding residues include asparagine 321 and glycine 323. Position 324 (threonine 324) interacts with 4-imidazolone-5-propanoate.

Belongs to the metallo-dependent hydrolases superfamily. HutI family. Zn(2+) is required as a cofactor. Fe(3+) serves as cofactor.

The protein resides in the cytoplasm. The enzyme catalyses 4-imidazolone-5-propanoate + H2O = N-formimidoyl-L-glutamate. Its pathway is amino-acid degradation; L-histidine degradation into L-glutamate; N-formimidoyl-L-glutamate from L-histidine: step 3/3. Catalyzes the hydrolytic cleavage of the carbon-nitrogen bond in imidazolone-5-propanoate to yield N-formimidoyl-L-glutamate. It is the third step in the universal histidine degradation pathway. This is Imidazolonepropionase from Salmonella enteritidis PT4 (strain P125109).